A 196-amino-acid polypeptide reads, in one-letter code: Pyridoxal 5'-phosphate synthase subunit PdxT (196 aa).

Residue 47 to 49 (GES) coordinates L-glutamine. Catalysis depends on cysteine 79, which acts as the Nucleophile. L-glutamine is bound by residues arginine 106 and 134–135 (IR). Catalysis depends on charge relay system residues histidine 170 and glutamate 172.

Belongs to the glutaminase PdxT/SNO family. As to quaternary structure, in the presence of PdxS, forms a dodecamer of heterodimers. Only shows activity in the heterodimer.

The catalysed reaction is aldehydo-D-ribose 5-phosphate + D-glyceraldehyde 3-phosphate + L-glutamine = pyridoxal 5'-phosphate + L-glutamate + phosphate + 3 H2O + H(+). The enzyme catalyses L-glutamine + H2O = L-glutamate + NH4(+). Its pathway is cofactor biosynthesis; pyridoxal 5'-phosphate biosynthesis. In terms of biological role, catalyzes the hydrolysis of glutamine to glutamate and ammonia as part of the biosynthesis of pyridoxal 5'-phosphate. The resulting ammonia molecule is channeled to the active site of PdxS. In Bacillus cereus (strain G9842), this protein is Pyridoxal 5'-phosphate synthase subunit PdxT.